The primary structure comprises 311 residues: MPAGRKWSYPMYNLTGLELKNPTILAAGVLGTTGASLCRVAREGGAGAVVTKSIGPAPKTGHSNPSMIKLDCGFLNAMGLPNPSYPGFLQELEFAKNNSAVPVIASIFGGAPSEFAEVAEGLLPAKPDALELNVSCPHAEGYGAAVGSNPCLVEAVTAAVKDVVNVPVWVKLTPNVADITCIGNAAESGGADAVVAINTVKGMAIDIESGYPVLGNRSGGLSGKAVKPVAVKCVYDLYTALEIPVIGVGGVSSWEDAVELMMAGAAAVQVGSAVYDRVDIFSEIGAGIEAFLERKGYSDIQKIIGLSHEMV.

Residues Lys-52, 76 to 80 (NAMGL), and Asn-133 contribute to the substrate site. 52-53 (KS) is a binding site for FMN. Residue Asn-133 coordinates FMN. Cys-136 serves as the catalytic Nucleophile. Lys-171 and Ile-197 together coordinate FMN. 198-199 (NT) contributes to the substrate binding site. FMN-binding positions include Gly-223, 249–250 (GG), and 271–272 (GS).

Belongs to the dihydroorotate dehydrogenase family. Type 1 subfamily. As to quaternary structure, heterotetramer of 2 PyrK and 2 PyrD type B subunits. It depends on FMN as a cofactor.

Its subcellular location is the cytoplasm. The enzyme catalyses (S)-dihydroorotate + NAD(+) = orotate + NADH + H(+). It participates in pyrimidine metabolism; UMP biosynthesis via de novo pathway; orotate from (S)-dihydroorotate (NAD(+) route): step 1/1. Functionally, catalyzes the conversion of dihydroorotate to orotate with NAD(+) as electron acceptor. In Methanosarcina acetivorans (strain ATCC 35395 / DSM 2834 / JCM 12185 / C2A), this protein is Dihydroorotate dehydrogenase B (NAD(+)), catalytic subunit (pyrD).